The sequence spans 181 residues: Beta-lactoglobulin-2 (181 aa).

The signal sequence occupies residues 1–18 (MKCLLLALGLSLMCGNQA). 2 disulfide bridges follow: C84–C179 and C124–C138.

This sequence belongs to the calycin superfamily. Lipocalin family. Monomer.

The protein localises to the secreted. In terms of biological role, lactoglobulin is the primary component of whey, it binds retinol and is probably involved in the transport of that molecule. This chain is Beta-lactoglobulin-2 (LGB2), found in Equus caballus (Horse).